Consider the following 398-residue polypeptide: Phosphoglycerate kinase (398 aa).

Substrate is bound by residues 23 to 25 (DFN), Arg38, 61 to 64 (HMGK), Arg122, and Arg155. Residues Lys206, Gly297, Glu328, and 354-357 (GGDS) each bind ATP.

The protein belongs to the phosphoglycerate kinase family. Monomer.

The protein resides in the cytoplasm. The enzyme catalyses (2R)-3-phosphoglycerate + ATP = (2R)-3-phospho-glyceroyl phosphate + ADP. The protein operates within carbohydrate degradation; glycolysis; pyruvate from D-glyceraldehyde 3-phosphate: step 2/5. This is Phosphoglycerate kinase from Clostridium botulinum (strain Okra / Type B1).